Consider the following 427-residue polypeptide: UDP-N-acetyl-D-mannosamine dehydrogenase (427 aa).

The NAD(+) site is built by tyrosine 19, isoleucine 20, aspartate 39, arginine 44, threonine 91, and threonine 130. The UDP-N-acetyl-alpha-D-mannosaminouronate site is built by arginine 155, valine 156, lysine 207, asparagine 211, arginine 214, histidine 245, arginine 247, and glycine 258. The Proton donor/acceptor role is filled by lysine 207. Cysteine 261 serves as the catalytic Nucleophile. UDP-N-acetyl-alpha-D-mannosaminouronate-binding residues include tyrosine 318 and lysine 319. Position 326 (arginine 326) interacts with NAD(+). UDP-N-acetyl-alpha-D-mannosaminouronate is bound at residue lysine 404.

It belongs to the UDP-glucose/GDP-mannose dehydrogenase family. Homotetramer; probably dimer of dimers.

The catalysed reaction is UDP-N-acetyl-alpha-D-mannosamine + 2 NAD(+) + H2O = UDP-N-acetyl-alpha-D-mannosaminouronate + 2 NADH + 3 H(+). Functionally, catalyzes the four-electron oxidation of UDP-N-acetyl-D-mannosamine (UDP-ManNAc), reducing NAD(+) and releasing UDP-N-acetylmannosaminuronic acid (UDP-ManNAcA). This is UDP-N-acetyl-D-mannosamine dehydrogenase (wecC) from Methanococcus vannielii (strain ATCC 35089 / DSM 1224 / JCM 13029 / OCM 148 / SB).